The chain runs to 504 residues: Maturase K (504 aa).

The protein belongs to the intron maturase 2 family. MatK subfamily.

It is found in the plastid. Its subcellular location is the chloroplast. In terms of biological role, usually encoded in the trnK tRNA gene intron. Probably assists in splicing its own and other chloroplast group II introns. This is Maturase K from Lepidium virginicum (Virginia pepperweed).